Consider the following 1423-residue polypeptide: DNA-directed RNA polymerase subunit beta' (1423 aa).

4 residues coordinate Zn(2+): Cys-71, Cys-73, Cys-86, and Cys-89. The Mg(2+) site is built by Asp-461, Asp-463, and Asp-465. Zn(2+) is bound by residues Cys-815, Cys-889, Cys-896, and Cys-899.

This sequence belongs to the RNA polymerase beta' chain family. As to quaternary structure, the RNAP catalytic core consists of 2 alpha, 1 beta, 1 beta' and 1 omega subunit. When a sigma factor is associated with the core the holoenzyme is formed, which can initiate transcription. The cofactor is Mg(2+). Zn(2+) serves as cofactor.

It carries out the reaction RNA(n) + a ribonucleoside 5'-triphosphate = RNA(n+1) + diphosphate. Its function is as follows. DNA-dependent RNA polymerase catalyzes the transcription of DNA into RNA using the four ribonucleoside triphosphates as substrates. The polypeptide is DNA-directed RNA polymerase subunit beta' (Actinobacillus pleuropneumoniae serotype 7 (strain AP76)).